The sequence spans 396 residues: Lysophospholipid transporter LplT (396 aa).

Residues 1–17 (MSESVHTNTSLWSKGMK) are Periplasmic-facing. A helical membrane pass occupies residues 18–38 (AVIVAQFLSAFGDNALLFATL). Topologically, residues 39 to 52 (ALLKAQFYPEWSQP) are cytoplasmic. Residues 53-73 (ILQMVFVGAYILLAPFVGQVA) traverse the membrane as a helical segment. Over 74-90 (DSFAKGRVMMFANGLKL) the chain is Periplasmic. The chain crosses the membrane as a helical span at residues 91–111 (LGAASICFGINPFLGYTLVGV). At 112 to 144 (GAAAYSPAKYGILGELTTGSKLVKANGLMEASA) the chain is on the cytoplasmic side. The helical transmembrane segment at 145-165 (IAAILLGSVAGGVLADWHVLV) threads the bilayer. Ala-166 is a topological domain (periplasmic). A helical membrane pass occupies residues 167–187 (LAACALAYGGAVVANIYIPKL). The Cytoplasmic segment spans residues 188–225 (AARPGQSWNLINMTRSFLNACTSLWCNGETRFSLVGAS). The chain crosses the membrane as a helical span at residues 226–246 (LFWGAGVTLRFLLVLWVPVAL). Topologically, residues 247-255 (GITDNATPT) are periplasmic. A helical membrane pass occupies residues 256 to 276 (YLNAMVAIGIVVGAGAAAKLV). Residues 277-279 (TLE) lie on the Cytoplasmic side of the membrane. The helical transmembrane segment at 280–300 (TVSRCMPAGILIGVVVLIFSL) threads the bilayer. The Periplasmic segment spans residues 301–303 (QHE). Residues 304–324 (LLPAYALLMLIGVLGGFFVVP) form a helical membrane-spanning segment. Residues 325–342 (LNALLQERGKKSVGAGNA) lie on the Cytoplasmic side of the membrane. Residues 343–363 (IAVQNLGENSAMLLMLGIYSL) traverse the membrane as a helical segment. Residues 364-365 (AV) are Periplasmic-facing. The chain crosses the membrane as a helical span at residues 366–386 (MVGIPVVPIGIGFGALFALAI). The Cytoplasmic segment spans residues 387-396 (TALWIWQRRH).

Belongs to the major facilitator superfamily. LplT (TC 2.A.1.42) family.

The protein resides in the cell inner membrane. Functionally, catalyzes the facilitated diffusion of 2-acyl-glycero-3-phosphoethanolamine (2-acyl-GPE) into the cell. The sequence is that of Lysophospholipid transporter LplT from Shigella flexneri serotype 5b (strain 8401).